A 300-amino-acid chain; its full sequence is MGDKIVRATAANGGIRLVAVLTTNATREAKKRHGLSYLTSSILGRAFSASLLLASSMKIMHGRVTLRVRSDGPLKGLLVDAGRDGKVRGYVGNPNLELDLVKTKSNKYSFDFTKALGTGYLNIIRDNGFGEPFTSTVELVNGNIAEDLASYLYHSEQTPSAVFIGEKIQNKNLICSGGLLAQVLPKKETDPLLVSLLEDRCKEINSFSEDLFESKDDLLSIIKNIFPDIDDKSISENARTQEVRFECRCSKQRSLNAMKMLDKDELEDILKKEGKAELVCEFCKNKYLINFEEIEEMIKA.

Cystine bridges form between cysteine 247–cysteine 249 and cysteine 280–cysteine 283.

The protein belongs to the HSP33 family. In terms of processing, under oxidizing conditions two disulfide bonds are formed involving the reactive cysteines. Under reducing conditions zinc is bound to the reactive cysteines and the protein is inactive.

It is found in the cytoplasm. Its function is as follows. Redox regulated molecular chaperone. Protects both thermally unfolding and oxidatively damaged proteins from irreversible aggregation. Plays an important role in the bacterial defense system toward oxidative stress. In Prochlorococcus marinus (strain MIT 9515), this protein is 33 kDa chaperonin.